The chain runs to 380 residues: Alkanesulfonate monooxygenase (380 aa).

It belongs to the SsuD family. As to quaternary structure, homotetramer.

It catalyses the reaction an alkanesulfonate + FMNH2 + O2 = an aldehyde + FMN + sulfite + H2O + 2 H(+). Functionally, catalyzes the desulfonation of aliphatic sulfonates. This Pectobacterium atrosepticum (strain SCRI 1043 / ATCC BAA-672) (Erwinia carotovora subsp. atroseptica) protein is Alkanesulfonate monooxygenase.